The primary structure comprises 28 residues: Ranatuerin-2LT (28 aa).

The cysteines at positions 23 and 28 are disulfide-linked.

Expressed by the skin glands.

It localises to the secreted. Functionally, has antibacterial activity. The chain is Ranatuerin-2LT from Rana latastei (Italian agile frog).